Consider the following 670-residue polypeptide: Mannosyl-oligosaccharide alpha-1,2-mannosidase IA (670 aa).

At 1–30 (MTGILPTYQRFVNGVPVPSISRRSFRLREK) the chain is on the cytoplasmic side. The chain crosses the membrane as a helical; Signal-anchor for type II membrane protein span at residues 31–51 (YLIVSVLLTFGIVWLGALFYL). The Lumenal segment spans residues 52 to 670 (PEFKSSNSVN…EPAHAQNNRI (619 aa)). An N-linked (GlcNAc...) asparagine glycan is attached at Asn-61. Residues 135–177 (DVAPSVSSSRGPSKPPVDAIEEPAVGNNAANKDVSPSGPKAES) are disordered. Cys-480 and Cys-512 are joined by a disulfide. Glu-526 acts as the Proton donor in catalysis. Ca(2+) is bound at residue Thr-637.

It belongs to the glycosyl hydrolase 47 family. Requires Ca(2+) as cofactor. N-glycosylated. Contains high mannose-type oligosaccharides.

The protein localises to the golgi apparatus membrane. The enzyme catalyses N(4)-(alpha-D-Man-(1-&gt;2)-alpha-D-Man-(1-&gt;2)-alpha-D-Man-(1-&gt;3)-[alpha-D-Man-(1-&gt;2)-alpha-D-Man-(1-&gt;3)-[alpha-D-Man-(1-&gt;2)-alpha-D-Man-(1-&gt;6)]-alpha-D-Man-(1-&gt;6)]-beta-D-Man-(1-&gt;4)-beta-D-GlcNAc-(1-&gt;4)-beta-D-GlcNAc)-L-asparaginyl-[protein] (N-glucan mannose isomer 9A1,2,3B1,2,3) + 4 H2O = N(4)-(alpha-D-Man-(1-&gt;3)-[alpha-D-Man-(1-&gt;3)-[alpha-D-Man-(1-&gt;6)]-alpha-D-Man-(1-&gt;6)]-beta-D-Man-(1-&gt;4)-beta-D-GlcNAc-(1-&gt;4)-beta-D-GlcNAc)-L-asparaginyl-[protein] (N-glucan mannose isomer 5A1,2) + 4 beta-D-mannose. It catalyses the reaction N(4)-(alpha-D-Man-(1-&gt;2)-alpha-D-Man-(1-&gt;2)-alpha-D-Man-(1-&gt;3)-[alpha-D-Man-(1-&gt;3)-[alpha-D-Man-(1-&gt;2)-alpha-D-Man-(1-&gt;6)]-alpha-D-Man-(1-&gt;6)]-beta-D-Man-(1-&gt;4)-beta-D-GlcNAc-(1-&gt;4)-beta-D-GlcNAc)-L-asparaginyl-[protein] (N-glucan mannose isomer 8A1,2,3B1,3) + 3 H2O = N(4)-(alpha-D-Man-(1-&gt;3)-[alpha-D-Man-(1-&gt;3)-[alpha-D-Man-(1-&gt;6)]-alpha-D-Man-(1-&gt;6)]-beta-D-Man-(1-&gt;4)-beta-D-GlcNAc-(1-&gt;4)-beta-D-GlcNAc)-L-asparaginyl-[protein] (N-glucan mannose isomer 5A1,2) + 3 beta-D-mannose. Its pathway is protein modification; protein glycosylation. Its activity is regulated as follows. Strongly inhibited by 1-deoxymannojirimycin, an inhibitor of class I alpha-mannosidases, and by EDTA. EDTA inhibition is reversed by the addition of calcium, but not of magnesium. In terms of biological role, involved in the maturation of Asn-linked oligosaccharides. Converts Man(9)GlcNAc(2) to Man(5)GlcNAc(2) primarily through the Man(7)GlcNAc(2) isomer C processing intermediate. The polypeptide is Mannosyl-oligosaccharide alpha-1,2-mannosidase IA (Spodoptera frugiperda (Fall armyworm)).